Consider the following 261-residue polypeptide: DNA repair protein RecO (261 aa).

Belongs to the RecO family.

Involved in DNA repair and RecF pathway recombination. In Pelodictyon phaeoclathratiforme (strain DSM 5477 / BU-1), this protein is DNA repair protein RecO.